Reading from the N-terminus, the 89-residue chain is Small ribosomal subunit protein uS15 (89 aa).

The protein belongs to the universal ribosomal protein uS15 family. Part of the 30S ribosomal subunit. Forms a bridge to the 50S subunit in the 70S ribosome, contacting the 23S rRNA.

Functionally, one of the primary rRNA binding proteins, it binds directly to 16S rRNA where it helps nucleate assembly of the platform of the 30S subunit by binding and bridging several RNA helices of the 16S rRNA. Forms an intersubunit bridge (bridge B4) with the 23S rRNA of the 50S subunit in the ribosome. The sequence is that of Small ribosomal subunit protein uS15 from Vibrio parahaemolyticus serotype O3:K6 (strain RIMD 2210633).